A 577-amino-acid polypeptide reads, in one-letter code: Acyl-coenzyme A synthetase ACSM1, mitochondrial (577 aa).

A mitochondrion-targeting transit peptide spans 1–31; it reads MQWLMRFRTLWGIHKSFHNIHPAPSQLRCRS. At K85 the chain carries N6-succinyllysine. K146 carries the post-translational modification N6-acetyllysine; alternate. K146 bears the N6-succinyllysine; alternate mark. N6-succinyllysine is present on K183. K204 is subject to N6-acetyllysine; alternate. K204 carries the N6-succinyllysine; alternate modification. K214 carries the post-translational modification N6-acetyllysine. Residue 226-234 participates in ATP binding; it reads TSGTTGFPK. K237 is subject to N6-succinyllysine. N6-acetyllysine; alternate occurs at positions 356 and 391. 2 positions are modified to N6-succinyllysine; alternate: K356 and K391. 2 residues coordinate ATP: D452 and R467. The residue at position 531 (K531) is an N6-acetyllysine. K538 is subject to N6-acetyllysine; alternate. Position 538 is an N6-succinyllysine; alternate (K538). Residue K549 is modified to N6-acetyllysine. K563 contributes to the ATP binding site.

Belongs to the ATP-dependent AMP-binding enzyme family. As to quaternary structure, monomer. Requires Mg(2+) as cofactor. Mn(2+) serves as cofactor.

The protein resides in the mitochondrion matrix. It is found in the mitochondrion. The enzyme catalyses a medium-chain fatty acid + ATP + CoA = a medium-chain fatty acyl-CoA + AMP + diphosphate. The catalysed reaction is benzoate + ATP + CoA = benzoyl-CoA + AMP + diphosphate. It catalyses the reaction (R)-lipoate + GTP + H(+) = (R)-lipoyl-GMP + diphosphate. It carries out the reaction octanoate + ATP + CoA = octanoyl-CoA + AMP + diphosphate. The enzyme catalyses decanoate + ATP + CoA = decanoyl-CoA + AMP + diphosphate. The catalysed reaction is dodecanoate + ATP + CoA = dodecanoyl-CoA + AMP + diphosphate. It catalyses the reaction tetradecanoate + ATP + CoA = tetradecanoyl-CoA + AMP + diphosphate. It carries out the reaction hexanoate + ATP + CoA = hexanoyl-CoA + AMP + diphosphate. The enzyme catalyses butanoate + ATP + CoA = butanoyl-CoA + AMP + diphosphate. The catalysed reaction is hexadecanoate + ATP + CoA = hexadecanoyl-CoA + AMP + diphosphate. Activated by monovalent cations, such as potassium, rubidium or ammonium. Its function is as follows. Catalyzes the activation of fatty acids by CoA to produce an acyl-CoA, the first step in fatty acid metabolism. Capable of activating medium-chain fatty acids (e.g. butyric (C4) to decanoic (C10) acids), and certain carboxylate-containing xenobiotics, e.g. benzoate. Also catalyzes the activation of lipoate to lipoyl-nucleoside monophosphate. Activates lipoate with GTP at a 1000-fold higher rate than with ATP and activates both (R)- and (S)-lipoate to the respective lipoyl-GMP, with a preference for (R)-lipoate. This is Acyl-coenzyme A synthetase ACSM1, mitochondrial (ACSM1) from Homo sapiens (Human).